The following is a 253-amino-acid chain: Large ribosomal subunit protein uL2C (253 aa).

The protein belongs to the universal ribosomal protein uL2 family. Component of the large ribosomal subunit (LSU). Mature yeast ribosomes consist of a small (40S) and a large (60S) subunit. The 40S small subunit contains 1 molecule of ribosomal RNA (18S rRNA) and at least 33 different proteins. The large 60S subunit contains 3 rRNA molecules (25S, 5.8S and 5S rRNA) and at least 46 different proteins.

Its subcellular location is the cytoplasm. It is found in the nucleus. In terms of biological role, component of the ribosome, a large ribonucleoprotein complex responsible for the synthesis of proteins in the cell. The small ribosomal subunit (SSU) binds messenger RNAs (mRNAs) and translates the encoded message by selecting cognate aminoacyl-transfer RNA (tRNA) molecules. The large subunit (LSU) contains the ribosomal catalytic site termed the peptidyl transferase center (PTC), which catalyzes the formation of peptide bonds, thereby polymerizing the amino acids delivered by tRNAs into a polypeptide chain. The nascent polypeptides leave the ribosome through a tunnel in the LSU and interact with protein factors that function in enzymatic processing, targeting, and the membrane insertion of nascent chains at the exit of the ribosomal tunnel. This chain is Large ribosomal subunit protein uL2C (rpl803), found in Schizosaccharomyces pombe (strain 972 / ATCC 24843) (Fission yeast).